A 236-amino-acid polypeptide reads, in one-letter code: Uridylate kinase (236 aa).

An ATP-binding site is contributed by 10 to 11 (GS). Gly44 provides a ligand contact to UMP. ATP-binding residues include Gly45 and Arg49. UMP contacts are provided by residues Asp66 and 114-120 (ITPGQTT). Residues Thr140, Tyr146, and Asp149 each contribute to the ATP site.

It belongs to the UMP kinase family. As to quaternary structure, homohexamer.

It localises to the cytoplasm. It carries out the reaction UMP + ATP = UDP + ADP. Its pathway is pyrimidine metabolism; CTP biosynthesis via de novo pathway; UDP from UMP (UMPK route): step 1/1. With respect to regulation, inhibited by UTP. Catalyzes the reversible phosphorylation of UMP to UDP. This is Uridylate kinase from Methanospirillum hungatei JF-1 (strain ATCC 27890 / DSM 864 / NBRC 100397 / JF-1).